The following is a 148-amino-acid chain: Large ribosomal subunit protein uL13 (148 aa).

2 stretches are compositionally biased toward basic and acidic residues: residues 71 to 81 (GKKEKQKEYHE) and 89 to 99 (DHSHSPEEMRA). Disordered stretches follow at residues 71 to 99 (GKKE…EMRA) and 125 to 148 (KKLK…LDNA).

This sequence belongs to the universal ribosomal protein uL13 family. As to quaternary structure, part of the 50S ribosomal subunit.

Its function is as follows. This protein is one of the early assembly proteins of the 50S ribosomal subunit, although it is not seen to bind rRNA by itself. It is important during the early stages of 50S assembly. The chain is Large ribosomal subunit protein uL13 from Salinibacter ruber (strain DSM 13855 / M31).